The chain runs to 508 residues: Cytochrome c-552 (508 aa).

A signal peptide spans 1–23; that stretch reads MNKSYKILLTGSVIAIGAMGLMA. A heme c-binding site is contributed by histidine 103. Residues cysteine 131, cysteine 134, and lysine 135 each contribute to the heme site. Residues cysteine 169, cysteine 172, histidine 173, cysteine 211, cysteine 214, and histidine 215 each contribute to the heme c site. Ca(2+) is bound by residues glutamate 217, tyrosine 218, lysine 274, and glutamine 276. Position 218 (tyrosine 218) interacts with substrate. Residue histidine 277 participates in substrate binding. Positions 288, 295, 298, 299, 313, 326, 329, 330, and 405 each coordinate heme c. The segment at 485 to 508 is disordered; that stretch reads GRLDPKTLEGMSNKSSWSQTELSQ. Residues 494–508 show a composition bias toward polar residues; the sequence is GMSNKSSWSQTELSQ.

This sequence belongs to the cytochrome c-552 family. It depends on Ca(2+) as a cofactor. Heme c serves as cofactor.

Its subcellular location is the periplasm. It carries out the reaction 6 Fe(III)-[cytochrome c] + NH4(+) + 2 H2O = 6 Fe(II)-[cytochrome c] + nitrite + 8 H(+). The protein operates within nitrogen metabolism; nitrate reduction (assimilation). Catalyzes the reduction of nitrite to ammonia, consuming six electrons in the process. The chain is Cytochrome c-552 from Desulfotalea psychrophila (strain LSv54 / DSM 12343).